The primary structure comprises 306 residues: Bifunctional protein FolD (306 aa).

Residues 169 to 171, Ser-194, and Ile-235 contribute to the NADP(+) site; that span reads GRS.

The protein belongs to the tetrahydrofolate dehydrogenase/cyclohydrolase family. In terms of assembly, homodimer.

The catalysed reaction is (6R)-5,10-methylene-5,6,7,8-tetrahydrofolate + NADP(+) = (6R)-5,10-methenyltetrahydrofolate + NADPH. It carries out the reaction (6R)-5,10-methenyltetrahydrofolate + H2O = (6R)-10-formyltetrahydrofolate + H(+). The protein operates within one-carbon metabolism; tetrahydrofolate interconversion. In terms of biological role, catalyzes the oxidation of 5,10-methylenetetrahydrofolate to 5,10-methenyltetrahydrofolate and then the hydrolysis of 5,10-methenyltetrahydrofolate to 10-formyltetrahydrofolate. The chain is Bifunctional protein FolD from Thermosynechococcus vestitus (strain NIES-2133 / IAM M-273 / BP-1).